The primary structure comprises 275 residues: Acetyl-coenzyme A carboxylase carboxyl transferase subunit beta (275 aa).

A CoA carboxyltransferase N-terminal domain is found at 21-275; that stretch reads GLWIKCQCGA…IKIIGMHQAG (255 aa). Positions 26, 28, 44, and 47 each coordinate Zn(2+). The C4-type zinc finger occupies 26 to 47; the sequence is CQCGAILFAKDLERNLKVCQKC.

Belongs to the AccD/PCCB family. As to quaternary structure, acetyl-CoA carboxylase is a heterohexamer composed of biotin carboxyl carrier protein (AccB), biotin carboxylase (AccC) and two subunits each of ACCase subunit alpha (AccA) and ACCase subunit beta (AccD). Requires Zn(2+) as cofactor.

The protein localises to the cytoplasm. The enzyme catalyses N(6)-carboxybiotinyl-L-lysyl-[protein] + acetyl-CoA = N(6)-biotinyl-L-lysyl-[protein] + malonyl-CoA. Its pathway is lipid metabolism; malonyl-CoA biosynthesis; malonyl-CoA from acetyl-CoA: step 1/1. Component of the acetyl coenzyme A carboxylase (ACC) complex. Biotin carboxylase (BC) catalyzes the carboxylation of biotin on its carrier protein (BCCP) and then the CO(2) group is transferred by the transcarboxylase to acetyl-CoA to form malonyl-CoA. This chain is Acetyl-coenzyme A carboxylase carboxyl transferase subunit beta, found in Desulforudis audaxviator (strain MP104C).